A 472-amino-acid polypeptide reads, in one-letter code: L-aspartate oxidase (472 aa).

FAD contacts are provided by residues 7-10 (SGIA), serine 29, 36-37 (ST), 42-43 (GG), and aspartate 191. The active-site Proton donor/acceptor is arginine 257. FAD contacts are provided by residues glutamate 337 and 353–354 (SL).

It belongs to the FAD-dependent oxidoreductase 2 family. NadB subfamily. Monomer. FAD is required as a cofactor.

It is found in the cytoplasm. The catalysed reaction is L-aspartate + O2 = iminosuccinate + H2O2. Its pathway is cofactor biosynthesis; NAD(+) biosynthesis; iminoaspartate from L-aspartate (oxidase route): step 1/1. Catalyzes the oxidation of L-aspartate to iminoaspartate, the first step in the de novo biosynthesis of NAD(+). Can also use L-asparagine, but not L-phenylalanine, L-glutamate, glycine, L-proline, L-alanine and D-aspartate. The protein is L-aspartate oxidase of Sulfurisphaera tokodaii (strain DSM 16993 / JCM 10545 / NBRC 100140 / 7) (Sulfolobus tokodaii).